Here is a 2016-residue protein sequence, read N- to C-terminus: Sodium channel protein type 5 subunit alpha (2016 aa).

Residues 1-129 (MANFLLPRGT…IRRAAVKILV (129 aa)) lie on the Cytoplasmic side of the membrane. Residues 28 to 56 (MAEKQARGSTTLQESREGLPEEEAPRPQL) form a disordered region. Phosphoserine is present on S36. T38 is modified (phosphothreonine). Over residues 41–52 (ESREGLPEEEAP) the composition is skewed to basic and acidic residues. An I repeat occupies 113–420 (VLSPFHPIRR…VVAMAYEEQN (308 aa)). Residues 130 to 149 (HSLFNMLIMCTILTNCVFMA) form a helical membrane-spanning segment. Topologically, residues 150-157 (QHDPPPWT) are extracellular. A helical membrane pass occupies residues 158–179 (KYVEYTFTAIYTFESLVKILAR). Over 180–188 (GFCLHAFTF) the chain is Cytoplasmic. The helical transmembrane segment at 189–209 (LRDPWNWLDFSVIIMAYTTEF) threads the bilayer. The Extracellular portion of the chain corresponds to 210–216 (VDLGNVS). A glycan (N-linked (GlcNAc...) asparagine) is linked at N214. A helical membrane pass occupies residues 217–236 (ALRTFRVLRALKTISVISGL). Topologically, residues 237–249 (KTIVGALIQSVKK) are cytoplasmic. The helical transmembrane segment at 250–272 (LADVMVLTVFCLSVFALIGLQLF) threads the bilayer. Topologically, residues 273 to 357 (MGNLRHKCVR…PDHGYTSFDS (85 aa)) are extracellular. C280 and C335 are disulfide-bonded. N283, N288, N291, N318, and N328 each carry an N-linked (GlcNAc...) asparagine glycan. Residues 358-378 (FAWAFLALFRLMTQDCWERLY) constitute an intramembrane region (pore-forming). Over 379–386 (QQTLRSAG) the chain is Extracellular. The helical transmembrane segment at 387 to 413 (KIYMIFFMLVIFLGSFYLVNLILAVVA) threads the bilayer. The Cytoplasmic segment spans residues 414-719 (MAYEEQNQAT…VKLVVMDPFT (306 aa)). Phosphoserine occurs at positions 457, 460, 483, and 484. Residues 461 to 591 (LEMSPLAPVN…APGHALHGKK (131 aa)) form a disordered region. A Phosphothreonine modification is found at T486. The segment covering 491 to 503 (EDRLPKSDSEDGP) has biased composition (basic and acidic residues). Phosphoserine is present on residues S497 and S510. Positions 509–528 (LSLTRGLSRTSMKPRSSRGS) are enriched in polar residues. 2 positions are modified to dimethylated arginine; alternate: R513 and R526. Omega-N-methylarginine; alternate occurs at positions 513 and 526. A phosphoserine mark is found at S539, S571, S664, and S667. Over residues 570–580 (TSAQGQPSPGT) the composition is skewed to polar residues. The residue at position 680 (R680) is a Dimethylated arginine; alternate. R680 carries the post-translational modification Omega-N-methylarginine; alternate. The II repeat unit spans residues 699–969 (CCPLWMSIKQ…QLALARIQRG (271 aa)). Residues 720 to 737 (DLTITMCIVLNTLFMALE) traverse the membrane as a helical segment. The Extracellular portion of the chain corresponds to 738-746 (HYNMTSEFE). Residue N740 is glycosylated (N-linked (GlcNAc...) asparagine). The chain crosses the membrane as a helical span at residues 747–769 (EMLQVGNLVFTGIFTAEMTFKII). Residues 770–775 (ALDPYY) lie on the Cytoplasmic side of the membrane. The chain crosses the membrane as a helical span at residues 776-796 (YFQQGWNIFDSIIVILSLMEL). Topologically, residues 797-806 (GLSRMSNLSV) are extracellular. An N-linked (GlcNAc...) asparagine glycan is attached at N803. A helical transmembrane segment spans residues 807–821 (LRSFRLLRVFKLAKS). Over 822–838 (WPTLNTLIKIIGNSVGA) the chain is Cytoplasmic. The helical transmembrane segment at 839 to 860 (LGNLTLVLAIIVFIFAVVGMQL) threads the bilayer. The Extracellular portion of the chain corresponds to 861–884 (FGKNYSELRDSDSGLLPRWHMMDF). N864 carries an N-linked (GlcNAc...) asparagine glycan. Positions 885–903 (FHAFLIIFRILCGEWIETM) form an intramembrane region, pore-forming. At 904–912 (WDCMEVSGQ) the chain is on the extracellular side. The cysteines at positions 906 and 915 are disulfide-linked. A helical membrane pass occupies residues 913–941 (SLCLLVFLLVMVIGNLVVLNLFLALLLSS). Residues 942-1203 (FSADNLTAPD…LRKTCYHIVE (262 aa)) lie on the Cytoplasmic side of the membrane. The segment at 1005 to 1141 (IATPYSPPPP…PEDSCSEGST (137 aa)) is disordered. Residues 1015 to 1030 (ETEKVPPTRKETRFEE) are compositionally biased toward basic and acidic residues. Low complexity predominate over residues 1033 to 1044 (QPGQGTPGDPEP). Positions 1054 to 1071 (SDTDDQEEDEENSLGTEE) are enriched in acidic residues. The segment covering 1096–1113 (SQVSATASSEAEASASQA) has biased composition (low complexity). The III repeat unit spans residues 1187–1501 (PGKVWWRLRK…KKYYNAMKKL (315 aa)). A helical transmembrane segment spans residues 1204-1225 (HSWFETFIIFMILLSSGALAFE). Residues 1226 to 1236 (DIYLEERKTIK) lie on the Extracellular side of the membrane. Residues 1237–1259 (VLLEYADKMFTYVFVLEMLLKWV) form a helical membrane-spanning segment. Residues 1260–1268 (AYGFKKYFT) lie on the Cytoplasmic side of the membrane. A helical transmembrane segment spans residues 1269–1291 (NAWCWLDFLIVDVSLVSLVANTL). Over 1292–1297 (GFAEMG) the chain is Extracellular. Residues 1298–1317 (PIKSLRTLRALRPLRALSRF) form a helical membrane-spanning segment. Topologically, residues 1318 to 1330 (EGMRVVVNALVGA) are cytoplasmic. A helical transmembrane segment spans residues 1331–1355 (IPSIMNVLLVCLIFWLIFSIMGVNL). The Extracellular portion of the chain corresponds to 1356–1400 (FAGKFGRCINQTEGDLPLNYTIVNNKSQCESLNLTGELYWTKVKV). N1365, N1374, N1380, and N1388 each carry an N-linked (GlcNAc...) asparagine glycan. The segment at residues 1401-1422 (NFDNVGAGYLALLQVATFKGWM) is an intramembrane region (pore-forming). Residues 1423–1445 (DIMYAAVDSRGYEEQPQWEYNLY) are Extracellular-facing. The chain crosses the membrane as a helical span at residues 1446 to 1470 (MYIYFVIFIIFGSFFTLNLFIGVII). Topologically, residues 1471 to 1528 (DNFNQQKKKLGGQDIFMTEEQKKYYNAMKKLGSKKPQKPIPRPLNKYQGFIFDIVTKQ) are cytoplasmic. The residue at position 1503 (S1503) is a Phosphoserine; by PKC. The IV repeat unit spans residues 1510–1807 (IPRPLNKYQG…WEKFDPEATQ (298 aa)). Residues 1529-1547 (AFDVTIMFLICLNMVTMMV) form a helical membrane-spanning segment. The Extracellular segment spans residues 1548–1558 (ETDDQSPEKIN). Residues 1559–1580 (ILAKINLLFVAIFTGECIVKLA) traverse the membrane as a helical segment. Over 1581–1589 (ALRHYYFTN) the chain is Cytoplasmic. The chain crosses the membrane as a helical span at residues 1590–1612 (SWNIFDFVVVILSIVGTVLSDII). Topologically, residues 1613 to 1619 (QKYFFSP) are extracellular. A helical membrane pass occupies residues 1620-1640 (TLFRVIRLARIGRILRLIRGA). Topologically, residues 1641–1650 (KGIRTLLFAL) are cytoplasmic. The helical transmembrane segment at 1651 to 1679 (MMSLPALFNIGLLLFLVMFIYSIFGMANF) threads the bilayer. Topologically, residues 1680–1697 (AYVKWEAGIDDMFNFQTF) are extracellular. Positions 1698–1714 (ANSMLCLFQITTSAGWD) form an intramembrane region, pore-forming. The Extracellular portion of the chain corresponds to 1715 to 1745 (GLLSPILNTGPPYCDPTLPNSNGSRGDCGSP). N1736 is a glycosylation site (N-linked (GlcNAc...) asparagine). A helical transmembrane segment spans residues 1746-1771 (AVGILFFTTYIIISFLIVVNMYIAII). Residues 1772-2016 (LENFSVATEE…SPDRDRESIV (245 aa)) lie on the Cytoplasmic side of the membrane. The interaction with FGF13 stretch occupies residues 1839–1901 (DLPMVSGDRI…ITTTLRRKHE (63 aa)). Positions 1901 to 1930 (EEVSAMVIQRAFRRHLLQRSLKHASFLFRQ) constitute an IQ domain. The span at 1959 to 1979 (PLGPPSSSSISSTSFPPSYDS) shows a compositional bias: low complexity. The segment at 1959 to 2016 (PLGPPSSSSISSTSFPPSYDSVTRATSDNLQVRGSDYSHSEDLADFPPSPDRDRESIV) is disordered. The interaction with NEDD4, NEDD4L and WWP2 stretch occupies residues 1974–1977 (PPSY). Over residues 1981–1990 (TRATSDNLQV) the composition is skewed to polar residues.

It belongs to the sodium channel (TC 1.A.1.10) family. Nav1.5/SCN5A subfamily. In terms of assembly, cannot form the same regulatory interactions with beta subunits as other Navs do. Interacts with the PDZ domain of the syntrophin SNTA1, SNTB1 and SNTB2. Interacts with NEDD4, NEDD4L, WWP2 and GPD1L. Interacts with CALM. Interacts with FGF13; the interaction is direct and FGF13 may regulate SNC5A density at membranes and function. May also interact with FGF12 and FGF14. Interacts with TMEM233. Interacts with the spider Jingzhaotoxin-I (AC P83974, AC B1P1B7, AC B1P1B8). Interacts with ANK3. Interacts with PKP2 (via N-terminus). Interacts with XIRP2; the interaction is required for normal action potential configuration in the heart. In terms of processing, ubiquitinated by NEDD4L; which promotes its endocytosis. Does not seem to be ubiquitinated by NEDD4 or WWP2. Phosphorylation at Ser-1503 by PKC in a highly conserved cytoplasmic loop slows inactivation of the sodium channel and reduces peak sodium currents. Regulated through phosphorylation by CaMK2D. Post-translationally, lacks the cysteine which covalently binds the conotoxin GVIIJ. This cysteine (position 868) is speculated in other sodium channel subunits alpha to be implied in covalent binding with the sodium channel subunit beta-2 or beta-4. In terms of processing, N-glycosylated at Asn-318, probably hinders potential interaction with regulatory subunits. Found in jejunal circular smooth muscle cells (at protein level). Expressed in human atrial and ventricular cardiac muscle but not in adult skeletal muscle, brain, myometrium, liver, or spleen. Isoform 4 is expressed in brain.

The protein localises to the cell membrane. It localises to the cytoplasm. The protein resides in the perinuclear region. Its subcellular location is the sarcolemma. It is found in the T-tubule. The protein localises to the cell junction. The catalysed reaction is Na(+)(in) = Na(+)(out). Channel inactivation is regulated by intracellular calcium levels. It is a tetrodotoxin-resistant voltage-gated Na(+) channel (Nav). Its function is as follows. Pore-forming subunit of Nav1.5, a voltage-gated sodium (Nav) channel that directly mediates the depolarizing phase of action potentials in excitable membranes. Navs, also called VGSCs (voltage-gated sodium channels) or VDSCs (voltage-dependent sodium channels), operate by switching between closed and open conformations depending on the voltage difference across the membrane. In the open conformation they allow Na(+) ions to selectively pass through the pore, along their electrochemical gradient. The influx of Na(+) ions provokes membrane depolarization, initiating the propagation of electrical signals throughout cells and tissues. Nav1.5 is the predominant sodium channel expressed in myocardial cells and it is responsible for the initial upstroke of the action potential in cardiac myocytes, thereby initiating the heartbeat. Required for normal electrical conduction including formation of the infranodal ventricular conduction system and normal action potential configuration, as a result of its interaction with XIRP2. The polypeptide is Sodium channel protein type 5 subunit alpha (Homo sapiens (Human)).